Reading from the N-terminus, the 469-residue chain is Biotin synthase (469 aa).

The region spanning 51–278 (MTVKVNYLVN…DKEIRMAGGR (228 aa)) is the Radical SAM core domain. [4Fe-4S] cluster-binding residues include Cys-66, Cys-70, and Cys-73. 4 residues coordinate [2Fe-2S] cluster: Cys-110, Cys-143, Cys-203, and Arg-273. The interval 326 to 469 (AGPDPSRDRH…GAGTSVAPNA (144 aa)) is disordered. Composition is skewed to low complexity over residues 363 to 384 (GSAA…APAD) and 405 to 428 (AGGP…MSPA).

Belongs to the radical SAM superfamily. Biotin synthase family. In terms of assembly, homodimer. [4Fe-4S] cluster is required as a cofactor. The cofactor is [2Fe-2S] cluster.

It carries out the reaction (4R,5S)-dethiobiotin + (sulfur carrier)-SH + 2 reduced [2Fe-2S]-[ferredoxin] + 2 S-adenosyl-L-methionine = (sulfur carrier)-H + biotin + 2 5'-deoxyadenosine + 2 L-methionine + 2 oxidized [2Fe-2S]-[ferredoxin]. The protein operates within cofactor biosynthesis; biotin biosynthesis; biotin from 7,8-diaminononanoate: step 2/2. Its function is as follows. Catalyzes the conversion of dethiobiotin (DTB) to biotin by the insertion of a sulfur atom into dethiobiotin via a radical-based mechanism. This chain is Biotin synthase, found in Kocuria rhizophila (strain ATCC 9341 / DSM 348 / NBRC 103217 / DC2201).